The chain runs to 429 residues: MSSRKVSRAHYDEDELASAANMSLVAEGHFRGMKELLSTMDLDTDANTIPELKERAHMLCARFLGGAWKTVPLEHLRISRIKGGMSNMLFLCRLSEVYPPIRNEPNKVLLRVYFNPETESHLVAESVIFTLLSERHLGPKLYGIFSGGRLEEYIPSRPLSCHEISLAHMSTKIAKRVAKVHQLEVPIWKEPDYLCEALQRWLKQLTGTVDAEHRFDLPEECGVSSVNCLDLARELEFLRAHISLSKSPVTFCHNDLQEGNILLPKASSGNIRMPSLSDETQALGNSLSAFNPADPRLVLIDFEYASYNYRAFDFANHFIEWTIDYDIDEAPFYKIQTENFPENDQMLEFFLNYLREQGNTRENELYKKSEDLVQETLPFVPVSHFFWGVWGLLQVELSPVGFGFADYGRDRLSLYFKHKQLLKNLASHQ.

ATP is bound by residues 82 to 88 (KGGMSNM), arginine 111, 152 to 158 (EYIPSRP), and glutamine 257. A substrate-binding site is contributed by 84–86 (GMS). Glutamate 258 lines the Ca(2+) pocket. Aspartate 301 provides a ligand contact to ATP. Residues glutamate 320 and isoleucine 323 each coordinate Ca(2+).

This sequence belongs to the choline/ethanolamine kinase family. As to quaternary structure, homodimer. A small proportion exists as higher oligomers. It depends on Mg(2+) as a cofactor.

The catalysed reaction is choline + ATP = phosphocholine + ADP + H(+). The enzyme catalyses ethanolamine + ATP = phosphoethanolamine + ADP + H(+). Its pathway is phospholipid metabolism; phosphatidylcholine biosynthesis; phosphocholine from choline: step 1/1. It participates in phospholipid metabolism; phosphatidylethanolamine biosynthesis; phosphatidylethanolamine from ethanolamine: step 1/3. Its activity is regulated as follows. Inhibited by Ca(2+). Mild inhibition by high levels of Mg(2+)(&gt;10 mM). Its function is as follows. Catalyzes the first step in phosphatidylcholine biosynthesis. May contribute to phosphatidylethanolamine biosynthesis. Phosphorylates choline and ethanolamine but the activity is much higher with choline. This Caenorhabditis elegans protein is Choline kinase A2.